A 325-amino-acid chain; its full sequence is Ferrochelatase (325 aa).

2 residues coordinate Fe cation: His-195 and Glu-276.

The protein belongs to the ferrochelatase family.

Its subcellular location is the cytoplasm. It carries out the reaction heme b + 2 H(+) = protoporphyrin IX + Fe(2+). The protein operates within porphyrin-containing compound metabolism; protoheme biosynthesis; protoheme from protoporphyrin-IX: step 1/1. Functionally, catalyzes the ferrous insertion into protoporphyrin IX. In Methylococcus capsulatus (strain ATCC 33009 / NCIMB 11132 / Bath), this protein is Ferrochelatase.